Consider the following 428-residue polypeptide: Probable dual-specificity RNA methyltransferase RlmN 2 (428 aa).

Glu142 serves as the catalytic Proton acceptor. The Radical SAM core domain occupies 148–414 (FAGRATACVS…STVRQRRGID (267 aa)). A disulfide bridge links Cys155 with Cys419. Cys162, Cys166, and Cys169 together coordinate [4Fe-4S] cluster. Residues 207 to 228 (MRDPSPGREAGEKSRDEADRHR) are compositionally biased toward basic and acidic residues. Positions 207 to 232 (MRDPSPGREAGEKSRDEADRHRAPPT) are disordered. S-adenosyl-L-methionine-binding positions include 244 to 245 (GE), Ser276, 299 to 301 (SLH), and Asn375. Cys419 functions as the S-methylcysteine intermediate in the catalytic mechanism.

This sequence belongs to the radical SAM superfamily. RlmN family. [4Fe-4S] cluster serves as cofactor.

Its subcellular location is the cytoplasm. It carries out the reaction adenosine(2503) in 23S rRNA + 2 reduced [2Fe-2S]-[ferredoxin] + 2 S-adenosyl-L-methionine = 2-methyladenosine(2503) in 23S rRNA + 5'-deoxyadenosine + L-methionine + 2 oxidized [2Fe-2S]-[ferredoxin] + S-adenosyl-L-homocysteine. The catalysed reaction is adenosine(37) in tRNA + 2 reduced [2Fe-2S]-[ferredoxin] + 2 S-adenosyl-L-methionine = 2-methyladenosine(37) in tRNA + 5'-deoxyadenosine + L-methionine + 2 oxidized [2Fe-2S]-[ferredoxin] + S-adenosyl-L-homocysteine. Functionally, specifically methylates position 2 of adenine 2503 in 23S rRNA and position 2 of adenine 37 in tRNAs. The sequence is that of Probable dual-specificity RNA methyltransferase RlmN 2 from Opitutus terrae (strain DSM 11246 / JCM 15787 / PB90-1).